The following is a 331-amino-acid chain: Meiotic recombination protein P22 (331 aa).

The disordered stretch occupies residues 132-187 (NNIQKEVHQRNSQRRSIQCTPKKRGRKPKQPAKKLQSRISTDQLGSTPSPSKLPAK). Residues 152 to 167 (PKKRGRKPKQPAKKLQ) show a composition bias toward basic residues. The segment covering 168–181 (SRISTDQLGSTPSP) has biased composition (polar residues).

The protein belongs to the TOP6B-like family.

Its subcellular location is the chromosome. Functionally, required for formation of the mei-W68-mediated double-strand breaks (DSBs) that initiate meiotic recombination. The sequence is that of Meiotic recombination protein P22 from Drosophila melanogaster (Fruit fly).